We begin with the raw amino-acid sequence, 197 residues long: Baseplate puncturing device gp45 (197 aa).

A disordered region spans residues 172 to 197 (DAIINGKSTDKHIHRGDSGGTTGPMQ). The span at 179–188 (STDKHIHRGD) shows a compositional bias: basic and acidic residues. Fe cation is bound by residues His-183 and His-185. Residues Asp-188 and Ser-189 each coordinate Ca(2+). Asp-188 contacts chloride.

In terms of assembly, homotrimer. Part of a complex composed of three DNA circularization protein N, three baseplate hub protein gp44 and three sub-complex wedge (made of two copies of each baseplate protein gp46, gp47 and gp48) that forms the baseplate. Ca(2+) is required as a cofactor. Chloride serves as cofactor. Requires Fe cation as cofactor.

Its subcellular location is the virion. The protein localises to the host cytoplasm. Its function is as follows. Component of the baseplate that forms a central needlelike spike used to puncture the host cell membrane for tube insertion during virus entry. Probably involved in baseplate and tail assembly. Serves as the distal plug of tail tube channel and might regulate the process of the phage DNA and protein ejection into the host cell. In Escherichia phage Mu (Bacteriophage Mu), this protein is Baseplate puncturing device gp45.